The chain runs to 468 residues: MSQGKIVQIIGAVVDVEFPRESVPKVYDALKVENTEITLEVQQQLGDGVVRTIALGSTDGLKRNLVAVNTGRGISVPVGAGTLGRIMDVLGRPIDEAGPVAASDSWEIHRAAPSYEDQSPATELLETGIKVIDLMCPFAKGGKVGLFGGAGVGKTVNMMELINNIAKAHSGLSVFAGVGERTREGNDFYHEMKDSNVLDKVAMVYGQMNEPPGNRLRVALTGLTMAEYFRDEKDENGKGKDVLLFVDNIYRYTLAGTEVSALLGRMPSAVGYQPTLAEEMGVLQERITSTKNGSITSIQAVYVPADDLTDPSPATTFAHLDSTVTLSRSIASLGIYPAVDPLDSTSRQMDPLVIGHEHYDTAQRVQQTLQKYKELKDIIAILGMDELSEEDKQAVSRARKIERFFSQPFHVAEVFTGSPGKYVPLKDTIRGFKAIVDGEYDHLPEQAFYMVGGIEEAVEKAKKMAEKA.

An ATP-binding site is contributed by 148 to 155 (GGAGVGKT).

Belongs to the ATPase alpha/beta chains family. F-type ATPases have 2 components, CF(1) - the catalytic core - and CF(0) - the membrane proton channel. CF(1) has five subunits: alpha(3), beta(3), gamma(1), delta(1), epsilon(1). CF(0) has three main subunits: a(1), b(2) and c(9-12). The alpha and beta chains form an alternating ring which encloses part of the gamma chain. CF(1) is attached to CF(0) by a central stalk formed by the gamma and epsilon chains, while a peripheral stalk is formed by the delta and b chains.

The protein resides in the cell membrane. It catalyses the reaction ATP + H2O + 4 H(+)(in) = ADP + phosphate + 5 H(+)(out). Its function is as follows. Produces ATP from ADP in the presence of a proton gradient across the membrane. The catalytic sites are hosted primarily by the beta subunits. The protein is ATP synthase subunit beta of Stenotrophomonas maltophilia (strain K279a).